We begin with the raw amino-acid sequence, 458 residues long: UDP-N-acetylmuramate--L-alanine ligase (458 aa).

G115–T121 is an ATP binding site.

This sequence belongs to the MurCDEF family.

The protein localises to the cytoplasm. The enzyme catalyses UDP-N-acetyl-alpha-D-muramate + L-alanine + ATP = UDP-N-acetyl-alpha-D-muramoyl-L-alanine + ADP + phosphate + H(+). The protein operates within cell wall biogenesis; peptidoglycan biosynthesis. Its function is as follows. Cell wall formation. The chain is UDP-N-acetylmuramate--L-alanine ligase from Anaeromyxobacter sp. (strain Fw109-5).